A 354-amino-acid chain; its full sequence is Vascular endothelial growth factor D (354 aa).

The N-terminal stretch at 1-21 is a signal peptide; it reads MYREWVVVNVFMMLYVQLVQG. A propeptide spans 22-88 (or 99 (in a minor form)); the sequence is SSNEHGPVKR…SRSASHRSTR (67 aa). 3 cysteine pairs are disulfide-bonded: cysteine 111–cysteine 153, cysteine 142–cysteine 189, and cysteine 146–cysteine 191. N-linked (GlcNAc...) asparagine glycosylation is found at asparagine 155 and asparagine 185. Positions 206–354 are excised as a propeptide; it reads SIQIPEEDRC…AQGPHSRKNP (149 aa). The 1; approximate repeat unit spans residues 222 to 237; the sequence is CPIDMLWDSNKCKCVL. The 4 X 16 AA repeats of C-X(10)-C-X-C-X(1,3)-C stretch occupies residues 222–318; the sequence is CPIDMLWDSN…PDTCSCEDRC (97 aa). 3 repeat units span residues 258–273, 277–293, and 301–318. An N-linked (GlcNAc...) asparagine glycan is attached at asparagine 287.

Belongs to the PDGF/VEGF growth factor family. Homodimer; non-covalent and antiparallel. Undergoes a complex proteolytic maturation which generates a variety of processed secreted forms with increased activity toward VEGFR-3 and VEGFR-2. VEGF-D first form an antiparallel homodimer linked by disulfide bonds before secretion. The fully processed VEGF-D is composed mostly of two VEGF homology domains (VHDs) bound by non-covalent interactions. In terms of tissue distribution, highly expressed in lung, heart, small intestine and fetal lung, and at lower levels in skeletal muscle, colon, and pancreas.

The protein resides in the secreted. Its function is as follows. Growth factor active in angiogenesis, lymphangiogenesis and endothelial cell growth, stimulating their proliferation and migration and also has effects on the permeability of blood vessels. May function in the formation of the venous and lymphatic vascular systems during embryogenesis, and also in the maintenance of differentiated lymphatic endothelium in adults. Binds and activates VEGFR-2 (KDR/FLK1) and VEGFR-3 (FLT4) receptors. The polypeptide is Vascular endothelial growth factor D (Homo sapiens (Human)).